Consider the following 168-residue polypeptide: UPF0303 protein YE1367 (168 aa).

It belongs to the UPF0303 family.

The chain is UPF0303 protein YE1367 from Yersinia enterocolitica serotype O:8 / biotype 1B (strain NCTC 13174 / 8081).